Consider the following 253-residue polypeptide: U2 small nuclear ribonucleoprotein A' (253 aa).

4 LRR repeats span residues 19 to 40 (KDRE…GIAK), 41 to 62 (DQDA…PFFP), 63 to 84 (RLHT…IAST), and 87 to 108 (NLTT…DPLR). An LRRCT domain is found at 121–159 (NPVTRKEHYRYWVIWRIPSVRFLDYQKVKDAERAKAKEL). Residues 228–253 (ELNEGRIPGGALDAGEDSEDENQMQT) form a disordered region. A compositionally biased stretch (acidic residues) spans 241–253 (AGEDSEDENQMQT).

The protein belongs to the U2 small nuclear ribonucleoprotein A family. In terms of assembly, associated with the spliceosome.

The protein localises to the nucleus. In terms of biological role, involved in pre-mRNA splicing. The sequence is that of U2 small nuclear ribonucleoprotein A' (lea1) from Aspergillus fumigatus (strain ATCC MYA-4609 / CBS 101355 / FGSC A1100 / Af293) (Neosartorya fumigata).